The chain runs to 377 residues: Nitric oxide reductase FlRd-NAD(+) reductase (377 aa).

Belongs to the FAD-dependent oxidoreductase family. It depends on FAD as a cofactor.

The protein resides in the cytoplasm. It carries out the reaction 2 reduced [nitric oxide reductase rubredoxin domain] + NAD(+) + H(+) = 2 oxidized [nitric oxide reductase rubredoxin domain] + NADH. The protein operates within nitrogen metabolism; nitric oxide reduction. Its function is as follows. One of at least two accessory proteins for anaerobic nitric oxide (NO) reductase. Reduces the rubredoxin moiety of NO reductase. This Shigella dysenteriae serotype 1 (strain Sd197) protein is Nitric oxide reductase FlRd-NAD(+) reductase.